Reading from the N-terminus, the 213-residue chain is Orotate phosphoribosyltransferase (213 aa).

A 5-phospho-alpha-D-ribose 1-diphosphate-binding site is contributed by Lys26. Phe34–Phe35 lines the orotate pocket. 5-phospho-alpha-D-ribose 1-diphosphate-binding positions include Tyr72–Lys73, Arg99, Lys100, Lys103, His105, and Asp124–Ala132. Residues Thr128 and Arg156 each coordinate orotate.

This sequence belongs to the purine/pyrimidine phosphoribosyltransferase family. PyrE subfamily. In terms of assembly, homodimer. Requires Mg(2+) as cofactor.

The catalysed reaction is orotidine 5'-phosphate + diphosphate = orotate + 5-phospho-alpha-D-ribose 1-diphosphate. The protein operates within pyrimidine metabolism; UMP biosynthesis via de novo pathway; UMP from orotate: step 1/2. Functionally, catalyzes the transfer of a ribosyl phosphate group from 5-phosphoribose 1-diphosphate to orotate, leading to the formation of orotidine monophosphate (OMP). The sequence is that of Orotate phosphoribosyltransferase from Yersinia enterocolitica serotype O:8 / biotype 1B (strain NCTC 13174 / 8081).